We begin with the raw amino-acid sequence, 657 residues long: MVYEMLSPVPVKKRHRPTLVCLNCRRRKTKCDRGKPSCSNCLKLGETCVYSEDTDENASKKVRYEYMDDLGLPEFINMAPKGLHLLSKRSASWFNGLFSDIAICDRDPYLRITNAVIDILRKSASKGIDRSERDTVLQLPNSLKTVTMYNRSEKSEDQLYHQIAREFSALRSAPIPETYVPYEYEFWSKYYPYFVDKIHPLVPVFNLIELKDLLEKFFQRQKDHPGKLNDKVHESTLLMLTYLIINFFLLEFDSHNRLIQDHINIIKKWLVQSKWFQKTTLLQLRVWLVLRFHNWCTYHDNDGNRMNANDGLMGLIMGHCASLGITWQLWTNVDSDECKNIWINALHWDRKLAVLNGNDTFNGRTMRVPELPNDHLVLKFLKCCVDDPTHVNYKLAIEILNKLNFEEQNPMVTWEWKVIVAVTKLQINHGRLNHINEGISAVIASLEDLITLWNEHFIRPLAPVSYSSRIIEISMNKALVLLPAIILRARNPCKQKILQLMDKILTTYFNEFPYYYHVFKRLFKYKLTLNLINREDSLDHMLTILKHENHQVLEKLGITSKDAEMSDDDVIKVWNARFSFTEKVVNLKVEMMCKNYEPNLFSSSYQHALEKLEERHSAKADAIDVTQFLQQVFDSTDFDLFYGMDVGELPKMDSILP.

A DNA-binding region (zn(2)-C6 fungal-type) is located at residues 21 to 48 (CLNCRRRKTKCDRGKPSCSNCLKLGETC).

Belongs to the OAF3 family.

Its subcellular location is the cytoplasm. The protein resides in the nucleus. It is found in the mitochondrion. In terms of biological role, transcriptional inhibitor with a significantly increased number of target genes in response to oleate. In Kluyveromyces lactis (strain ATCC 8585 / CBS 2359 / DSM 70799 / NBRC 1267 / NRRL Y-1140 / WM37) (Yeast), this protein is Oleate activated transcription factor 3 (OAF3).